A 724-amino-acid chain; its full sequence is 1,4-alpha-glucan branching enzyme GlgB 1 (724 aa).

Residue Asp-403 is the Nucleophile of the active site. Glu-456 functions as the Proton donor in the catalytic mechanism.

Belongs to the glycosyl hydrolase 13 family. GlgB subfamily. In terms of assembly, monomer.

The enzyme catalyses Transfers a segment of a (1-&gt;4)-alpha-D-glucan chain to a primary hydroxy group in a similar glucan chain.. It functions in the pathway glycan biosynthesis; glycogen biosynthesis. Functionally, catalyzes the formation of the alpha-1,6-glucosidic linkages in glycogen by scission of a 1,4-alpha-linked oligosaccharide from growing alpha-1,4-glucan chains and the subsequent attachment of the oligosaccharide to the alpha-1,6 position. This is 1,4-alpha-glucan branching enzyme GlgB 1 from Xanthomonas campestris pv. campestris (strain 8004).